The sequence spans 1671 residues: Fatty acid synthase alpha subunit aflA (1671 aa).

The segment at 40 to 60 (ITEEAPTEQPPLSTPPSLPQT) is disordered. The segment covering 47–58 (EQPPLSTPPSLP) has biased composition (pro residues). One can recognise a Carrier domain in the interval 75–153 (DVALSRVQIV…DANPTVQLGK (79 aa)). Ser-113 is subject to O-(pantetheine 4'-phosphoryl)serine. The interval 492 to 729 (GKTFLVTGAG…AMLLTPDFVA (238 aa)) is ketoreductase (KR) domain. Positions 926 to 1428 (MEVLQEVAVE…QKGGQVVGVA (503 aa)) constitute a Ketosynthase family 3 (KS3) domain. The active-site For beta-ketoacyl synthase activity is the Cys-1113. The segment covering 1244 to 1270 (SMISVTSRPSSRSSTSSEVSDKSSLTS) has biased composition (low complexity). The tract at residues 1244–1288 (SMISVTSRPSSRSSTSSEVSDKSSLTSITSISNPAPRAQRARSTT) is disordered. Catalysis depends on for beta-ketoacyl synthase activity residues His-1313 and His-1354. The interval 1497–1521 (PSTGQYRFRSDATPALDDDALPPPG) is disordered. Asp-1552 provides a ligand contact to Mg(2+). Residues 1552 to 1554 (DLV), 1598 to 1608 (EAVFKCLQTHS), 1622 to 1625 (HGGN), and 1652 to 1654 (ISY) each bind acetyl-CoA. Position 1653 (Ser-1653) interacts with Mg(2+).

The protein belongs to the thiolase-like superfamily. Fungal fatty acid synthetase subunit alpha family. In terms of assembly, [Alpha(6)beta(6)] hexamers of two multifunctional subunits (alpha and beta). Post-translationally, 4'-phosphopantetheine is transferred from CoA to a specific serine of the acyl carrier domain by the C-terminal PPT domain. This modification is essential for activity because fatty acids are bound in thioester linkage to the sulfhydryl of the prosthetic group.

The catalysed reaction is acetyl-CoA + n malonyl-CoA + 2n NADPH + 4n H(+) = a long-chain-acyl-CoA + n CoA + n CO2 + 2n NADP(+).. The enzyme catalyses a fatty acyl-[ACP] + malonyl-[ACP] + H(+) = a 3-oxoacyl-[ACP] + holo-[ACP] + CO2. It catalyses the reaction a (3R)-hydroxyacyl-[ACP] + NADP(+) = a 3-oxoacyl-[ACP] + NADPH + H(+). It functions in the pathway mycotoxin biosynthesis; aflatoxin biosynthesis. Its function is as follows. Fatty acid synthase alpha subunit; part of the gene cluster that mediates the biosynthesis of aflatoxins, a group of polyketide-derived furanocoumarins, and part of the most toxic and carcinogenic compounds among the known mycotoxins. The four major aflatoxins produced by A.parasiticus are aflatoxin B1 (AFB1), aflatoxin B2 (AFB2), aflatoxin G1 (AFG1) and aflatoxin G2 (AFG2). Within the aflatoxin pathway, the fungal fatty acid synthase aflA/aflB provides the hexanoyl starter unit to the acyl-carrier protein (ACP) domain of the norsolorinic acid synthase to allow the first step of the pathway. The biosynthesis of aflatoxins begins with the norsolorinic acid synthase aflC that combines a hexanoyl starter unit produced by the fatty acid synthase aflA/aflB and 7 malonyl-CoA extender units to synthesize the precursor NOR. The second step is the conversion of NOR to averantin (AVN) and requires the norsolorinic acid ketoreductase aflD, which catalyzes the dehydration of norsolorinic acid to form (1'S)-averantin. The norsolorinic acid reductases aflE and aflF may also play a role in the conversion of NOR to AVN. The cytochrome P450 monooxygenase aflG then catalyzes the hydroxylation of AVN to 5'hydroxyaverantin (HAVN). The next step is performed by the 5'-hydroxyaverantin dehydrogenase aflH that transforms HAVN to 5'-oxoaverantin (OAVN) which is further converted to averufin (AVF) by aflK that plays a dual role in the pathway, as a 5'-oxoaverantin cyclase that mediates conversion of 5'-oxoaverantin, as well as a versicolorin B synthase in a later step in the pathway. The averufin oxidase aflI catalyzes the conversion of AVF to versiconal hemiacetal acetate (VHA). VHA is then the substrate for the versiconal hemiacetal acetate esterase aflJ to yield versiconal (VAL). Versicolorin B synthase aflK then converts VAL to versicolorin B (VERB) by closing the bisfuran ring of aflatoxin which is required for DNA-binding, thus giving to aflatoxin its activity as a mutagen. Then, the activity of the versicolorin B desaturase aflL leads to versicolorin A (VERA). A branch point starts from VERB since it can also be converted to dihydrodemethylsterigmatocystin (DMDHST), probably also by aflL, VERA being a precursor for aflatoxins B1 and G1, and DMDHST for aflatoxins B2 and G2. Next, the versicolorin reductase aflM and the cytochrome P450 monooxygenase aflN are involved in conversion of VERA to demethylsterigmatocystin (DMST). AflX and aflY seem also involved in this step, through probable aflX-mediated epoxide ring-opening step following versicolorin A oxidation and aflY-mediated Baeyer-Villiger oxidation required for the formation of the xanthone ring. The methyltransferase aflO then leads to the modification of DMST to sterigmatocystin (ST), and of DMDHST to dihydrosterigmatocystin (DHST). Both ST and DHST are then substrates of the O-methyltransferase aflP to yield O-methylsterigmatocystin (OMST) and dihydro-O-methylsterigmatocystin (DHOMST), respectively. Finally OMST is converted to aflatoxins B1 and G1, and DHOMST to aflatoxins B2 and G2, via the action of several enzymes including O-methylsterigmatocystin oxidoreductase aflQ, the cytochrome P450 monooxygenase aflU, but also the NADH-dependent flavin oxidoreductase nadA which is specifically required for the synthesis of AFG1. In Aspergillus parasiticus (strain ATCC 56775 / NRRL 5862 / SRRC 143 / SU-1), this protein is Fatty acid synthase alpha subunit aflA.